Here is a 410-residue protein sequence, read N- to C-terminus: 2-oxoisovalerate dehydrogenase subunit alpha (410 aa).

Belongs to the BCKDHA family. In terms of assembly, heterodimer of an alpha and a beta chain. Thiamine diphosphate serves as cofactor.

It carries out the reaction N(6)-[(R)-lipoyl]-L-lysyl-[protein] + 3-methyl-2-oxobutanoate + H(+) = N(6)-[(R)-S(8)-2-methylpropanoyldihydrolipoyl]-L-lysyl-[protein] + CO2. The branched-chain alpha-keto dehydrogenase complex catalyzes the overall conversion of alpha-keto acids to acyl-CoA and CO(2). It contains multiple copies of three enzymatic components: branched-chain alpha-keto acid decarboxylase (E1), lipoamide acyltransferase (E2) and lipoamide dehydrogenase (E3). In Pseudomonas aeruginosa (strain ATCC 15692 / DSM 22644 / CIP 104116 / JCM 14847 / LMG 12228 / 1C / PRS 101 / PAO1), this protein is 2-oxoisovalerate dehydrogenase subunit alpha (bkdA1).